A 182-amino-acid polypeptide reads, in one-letter code: Adenine phosphoribosyltransferase (182 aa).

Belongs to the purine/pyrimidine phosphoribosyltransferase family. Homodimer.

It localises to the cytoplasm. It catalyses the reaction AMP + diphosphate = 5-phospho-alpha-D-ribose 1-diphosphate + adenine. It participates in purine metabolism; AMP biosynthesis via salvage pathway; AMP from adenine: step 1/1. In terms of biological role, catalyzes a salvage reaction resulting in the formation of AMP, that is energically less costly than de novo synthesis. The protein is Adenine phosphoribosyltransferase of Stutzerimonas stutzeri (strain A1501) (Pseudomonas stutzeri).